The chain runs to 1209 residues: 3',5'-cyclic-AMP phosphodiesterase, isoform I (1209 aa).

7 disordered regions span residues 16–35 (NVAK…GSGT), 59–82 (GGGS…KRKS), 275–353 (LYSG…PLPP), 372–403 (SATS…SPRI), 442–498 (ETLA…MQAE), 626–655 (VPAS…LSQG), and 754–792 (SAGQ…RLPT). Composition is skewed to gly residues over residues 25-35 (SSNGTGNGSGT) and 59-77 (GGGS…GSGS). Residues 275–290 (LYSGSNPSTNPCQSAV) show a composition bias toward polar residues. Residues 291–314 (QNQGQNSNPNPNQNPNTNPNQNQQ) are compositionally biased toward low complexity. The span at 315 to 324 (RCSCQPQTSP) shows a compositional bias: polar residues. The segment covering 372-383 (SATSSSAGTVPP) has biased composition (low complexity). Residues 385–400 (GQQTQEYIAGTSSTPS) are compositionally biased toward polar residues. Low complexity-rich tracts occupy residues 445–462 (ASSS…NSSS) and 472–483 (TSSSASALATSH). Composition is skewed to polar residues over residues 484–498 (PSNS…MQAE) and 627–645 (PASN…SRSG). One can recognise a PDEase domain in the interval 795-1124 (VETPRENELG…DYYQSMIPPS (330 aa)). The Proton donor role is filled by His871. Position 871–875 (871–875 (HNSLH)) interacts with 3',5'-cyclic AMP. Residues His875, His911, Asp912, and Asp1029 each coordinate a divalent metal cation. Asp912, Asp1029, and Gln1080 together coordinate 3',5'-cyclic AMP. The span at 1146–1163 (EESDQENLAELEEGDESG) shows a compositional bias: acidic residues. Residues 1146–1209 (EESDQENLAE…CQNQPQHGGM (64 aa)) are disordered. Positions 1164–1181 (GESTTTGTTGTTAASALS) are enriched in low complexity. Residues 1182-1193 (GAGGGGGGGGGM) show a composition bias toward gly residues. Residues 1199–1209 (GCQNQPQHGGM) show a composition bias toward polar residues.

This sequence belongs to the cyclic nucleotide phosphodiesterase family. PDE4 subfamily. Monomer. It depends on a divalent metal cation as a cofactor.

The catalysed reaction is 3',5'-cyclic AMP + H2O = AMP + H(+). Its pathway is purine metabolism; 3',5'-cyclic AMP degradation; AMP from 3',5'-cyclic AMP: step 1/1. Its function is as follows. Hydrolyzes the second messenger cAMP, which is a key regulator of many important physiological processes. Vital for female fertility. Required for learning/memory. The polypeptide is 3',5'-cyclic-AMP phosphodiesterase, isoform I (Drosophila melanogaster (Fruit fly)).